The chain runs to 434 residues: Enolase (434 aa).

Position 163 (Gln-163) interacts with (2R)-2-phosphoglycerate. Catalysis depends on Glu-205, which acts as the Proton donor. 3 residues coordinate Mg(2+): Asp-242, Glu-289, and Asp-316. Lys-341, Arg-370, Ser-371, and Lys-392 together coordinate (2R)-2-phosphoglycerate. Lys-341 serves as the catalytic Proton acceptor.

This sequence belongs to the enolase family. The cofactor is Mg(2+).

The protein localises to the cytoplasm. It localises to the secreted. The protein resides in the cell surface. The catalysed reaction is (2R)-2-phosphoglycerate = phosphoenolpyruvate + H2O. Its pathway is carbohydrate degradation; glycolysis; pyruvate from D-glyceraldehyde 3-phosphate: step 4/5. Catalyzes the reversible conversion of 2-phosphoglycerate (2-PG) into phosphoenolpyruvate (PEP). It is essential for the degradation of carbohydrates via glycolysis. The polypeptide is Enolase (Lacticaseibacillus casei (strain BL23) (Lactobacillus casei)).